The sequence spans 98 residues: Small ribosomal subunit protein eS24 (98 aa).

The protein belongs to the eukaryotic ribosomal protein eS24 family.

The protein is Small ribosomal subunit protein eS24 of Thermococcus onnurineus (strain NA1).